The primary structure comprises 664 residues: Transketolase 1 (664 aa).

His-26 lines the substrate pocket. Thiamine diphosphate is bound by residues His-66 and 114–116 (GPL). Mg(2+) is bound at residue Asp-155. 2 residues coordinate thiamine diphosphate: Gly-156 and Asn-185. Positions 185 and 187 each coordinate Mg(2+). His-260, Arg-357, and Ser-384 together coordinate substrate. Residue His-260 coordinates thiamine diphosphate. Residue Glu-411 is the Proton donor of the active site. Phe-437 provides a ligand contact to thiamine diphosphate. 3 residues coordinate substrate: His-461, Asp-469, and Arg-520.

Belongs to the transketolase family. As to quaternary structure, homodimer. Mg(2+) is required as a cofactor. It depends on Ca(2+) as a cofactor. Mn(2+) serves as cofactor. Requires Co(2+) as cofactor. The cofactor is thiamine diphosphate.

It carries out the reaction D-sedoheptulose 7-phosphate + D-glyceraldehyde 3-phosphate = aldehydo-D-ribose 5-phosphate + D-xylulose 5-phosphate. Catalyzes the transfer of a two-carbon ketol group from a ketose donor to an aldose acceptor, via a covalent intermediate with the cofactor thiamine pyrophosphate. This chain is Transketolase 1 (tkt1), found in Vibrio parahaemolyticus serotype O3:K6 (strain RIMD 2210633).